The chain runs to 52 residues: UPF0181 protein CGSHiGG_01050 (52 aa).

The protein belongs to the UPF0181 family.

The sequence is that of UPF0181 protein CGSHiGG_01050 from Haemophilus influenzae (strain PittGG).